The following is a 346-amino-acid chain: Phosphate acyltransferase (346 aa).

This sequence belongs to the PlsX family. Homodimer. Probably interacts with PlsY.

It localises to the cytoplasm. It catalyses the reaction a fatty acyl-[ACP] + phosphate = an acyl phosphate + holo-[ACP]. It participates in lipid metabolism; phospholipid metabolism. Its function is as follows. Catalyzes the reversible formation of acyl-phosphate (acyl-PO(4)) from acyl-[acyl-carrier-protein] (acyl-ACP). This enzyme utilizes acyl-ACP as fatty acyl donor, but not acyl-CoA. The sequence is that of Phosphate acyltransferase from Brucella abortus (strain S19).